The primary structure comprises 116 residues: uncharacterized protein (116 aa).

A signal peptide spans 1 to 15 (MKKYFLILASFMLVA).

This is an uncharacterized protein from Haemophilus influenzae (strain ATCC 51907 / DSM 11121 / KW20 / Rd).